The following is a 229-amino-acid chain: Large ribosomal subunit protein uL1 (229 aa).

This sequence belongs to the universal ribosomal protein uL1 family. In terms of assembly, part of the 50S ribosomal subunit.

In terms of biological role, binds directly to 23S rRNA. The L1 stalk is quite mobile in the ribosome, and is involved in E site tRNA release. Protein L1 is also a translational repressor protein, it controls the translation of the L11 operon by binding to its mRNA. The sequence is that of Large ribosomal subunit protein uL1 from Streptococcus equi subsp. equi (strain 4047).